Reading from the N-terminus, the 78-residue chain is Large ribosomal subunit protein bL28 (78 aa).

Belongs to the bacterial ribosomal protein bL28 family.

This is Large ribosomal subunit protein bL28 from Leifsonia xyli subsp. xyli (strain CTCB07).